A 3010-amino-acid polypeptide reads, in one-letter code: Genome polyprotein (3010 aa).

Serine 2 bears the N-acetylserine; by host mark. The interval 2–23 is interaction with STAT1; it reads STNPKPQRKTKRNTNRRPQDVK. An interaction with EIF2AK2/PKR region spans residues 2–58; sequence STNPKPQRKTKRNTNRRPQDVKFPGGGQIVGGVYLLPRRGPRLGVRATRKTSERSQP. The interval 2 to 59 is interaction with DDX3X; it reads STNPKPQRKTKRNTNRRPQDVKFPGGGQIVGGVYLLPRRGPRLGVRATRKTSERSQPR. The interval 2–75 is disordered; that stretch reads STNPKPQRKT…PKARRPEGRT (74 aa). Over 2-168 the chain is Cytoplasmic; the sequence is STNPKPQRKT…EDGVNYATGN (167 aa). 2 short sequence motifs (nuclear localization signal) span residues 5–13 and 38–43; these read PKPQRKTKR and PRRGPR. The segment covering 7–16 has biased composition (basic residues); the sequence is PQRKTKRNTN. Residues 32 to 47 show a composition bias toward low complexity; that stretch reads GGVYLLPRRGPRLGVR. Phosphoserine; by host is present on serine 53. 2 short sequence motifs (nuclear localization signal) span residues 58 to 64 and 66 to 71; these read PRGRRQP and PKARRP. Over residues 58–68 the composition is skewed to basic residues; that stretch reads PRGRRQPIPKA. A Phosphoserine; by host modification is found at serine 99. An important for endoplasmic reticulum and mitochondrial localization region spans residues 112-152; it reads PRRRSRNLGKVIDTLTCGFADLMGYIPLVGAPLGGAARALA. Serine 116 carries the phosphoserine; by host PKA modification. Residues 122 to 173 form an interaction with APOA2 region; that stretch reads VIDTLTCGFADLMGYIPLVGAPLGGAARALAHGVRVLEDGVNYATGNLPGCS. The tract at residues 164 to 167 is important for lipid droplets localization; sequence YATG. The chain crosses the membrane as a helical span at residues 169–189; it reads LPGCSFSIFLLALLSCLTIPA. Residues 178–191 constitute a propeptide, ER anchor for the core protein, removed in mature form by host signal peptidase; the sequence is LLALLSCLTIPASA. The Lumenal segment spans residues 190 to 358; the sequence is SAYEVRNVSG…AGAHWGVLAG (169 aa). Asparagine 196, asparagine 209, and asparagine 234 each carry an N-linked (GlcNAc...) asparagine; by host glycan. The segment at 265–296 is important for fusion; sequence LVGAAALCSAMYVGDLCGSVFLVSQLFTFSPR. Asparagine 305 is a glycosylation site (N-linked (GlcNAc...) asparagine; by host). Residues 359–379 traverse the membrane as a helical segment; sequence LAYYSMVGNWAKVLIVMLLFA. At 380 to 725 the chain is on the lumenal side; it reads GVDGHTHVTG…WEYILLLFLL (346 aa). 2 O-linked (Hex...) threonine; by host glycosylation sites follow: threonine 385 and threonine 396. Positions 385–411 are HVR1; sequence THVTGGRVASSTQSLVSWLSQGPSQKI. 2 O-linked (Hex...) serine; by host glycosylation sites follow: serine 401 and serine 404. Asparagine 417, asparagine 423, asparagine 430, and asparagine 448 each carry an N-linked (GlcNAc...) (high mannose) asparagine; by host glycan. 4 disulfide bridges follow: cysteine 429–cysteine 552, cysteine 452–cysteine 459, cysteine 486–cysteine 494, and cysteine 503–cysteine 508. An O-linked (Hex...) threonine; by host glycan is attached at threonine 473. The tract at residues 474–482 is HVR2; sequence HDMPESSDQ. Residues 480–493 are CD81-binding 1; that stretch reads SDQRPYCWHYAPRP. O-linked (Hex...) threonine; by host glycosylation occurs at threonine 518. N-linked (GlcNAc...) (high mannose) asparagine; by host glycosylation is present at asparagine 532. The CD81-binding 2 stretch occupies residues 544–551; that stretch reads PPQGNWFG. A glycan (N-linked (GlcNAc...) (high mannose) asparagine; by host) is linked at asparagine 556. Cysteine 564 and cysteine 569 are joined by a disulfide. A glycan (N-linked (GlcNAc...) (high mannose) asparagine; by host) is linked at asparagine 576. Disulfide bonds link cysteine 581-cysteine 585, cysteine 597-cysteine 620, and cysteine 607-cysteine 644. Residues asparagine 623 and asparagine 645 are each glycosylated (N-linked (GlcNAc...) (high mannose) asparagine; by host). Cysteine 652 and cysteine 677 form a disulfide bridge. The tract at residues 660–671 is EIF2AK2/eIF2-alpha phosphorylation homology domain (PePHD); it reads SELSPLLLSTTE. The chain crosses the membrane as a helical span at residues 726 to 746; the sequence is LADARVCACLWMMLLIAQAEA. At 747-757 the chain is on the lumenal side; sequence TLENLVVLNAA. The chain crosses the membrane as a helical span at residues 758-778; it reads SVAGAHGLLSFLVFFCAAWYI. The Cytoplasmic portion of the chain corresponds to 779 to 781; it reads KGR. The chain crosses the membrane as a helical span at residues 782–803; it reads LVPGAAYALYGVWPLLLLLLAL. Over 804-813 the chain is Lumenal; that stretch reads PPRAYAMDRE. A helical transmembrane segment spans residues 814 to 834; sequence MAASCGGAVFVGLVLLTLSPY. At 835 to 838 the chain is on the cytoplasmic side; sequence YKVF. A helical membrane pass occupies residues 839–859; the sequence is LARLIWWLQYFITRAEAHLQV. The Lumenal portion of the chain corresponds to 860–881; that stretch reads WVPPLNVRGGRDAIILLTCAVH. The chain crosses the membrane as a helical span at residues 882 to 902; the sequence is PELIFDITKLLLAILGPLMVL. A Peptidase C18 domain is found at 903–1026; the sequence is QAGITRVPYF…SFGEQGWRLL (124 aa). Over 903–1657 the chain is Cytoplasmic; the sequence is QAGITRVPYF…CMSADLEVVT (755 aa). Residues 904 to 1206 are protease NS2-3; that stretch reads AGITRVPYFV…PVESMETTMR (303 aa). Residue cysteine 922 is the site of S-palmitoyl cysteine; by host attachment. Positions 929–949 are interaction with host SCPS1; that stretch reads AGGHYVQMAFMKLAALTGTYV. Active-site for protease NS2 activity; shared with dimeric partner residues include histidine 952, glutamate 972, and cysteine 993. The region spanning 1027–1208 is the Peptidase S29 domain; sequence APITAYSQQT…ESMETTMRSP (182 aa). Active-site charge relay system; for serine protease NS3 activity residues include histidine 1083 and aspartate 1107. Zn(2+)-binding residues include cysteine 1123 and cysteine 1125. Serine 1165 acts as the Charge relay system; for serine protease NS3 activity in catalysis. The Zn(2+) site is built by cysteine 1171 and histidine 1175. One can recognise a Helicase ATP-binding domain in the interval 1217-1369; the sequence is PAVPQTFQVA…PNIEEVALSN (153 aa). 1230–1237 serves as a coordination point for ATP; the sequence is APTGSGKS. Serine 1237 and glutamate 1317 together coordinate Mg(2+). Positions 1316–1319 match the DECH box motif; that stretch reads DECH. The segment at 1486 to 1497 is RNA-binding; the sequence is QRRGRTGRGRSG. Residues 1658–1678 form a helical membrane-spanning segment; that stretch reads STWVLVGGVLAALAAYCLTTG. The interval 1679–1690 is NS3-binding; the sequence is SVVIVGRIILSG. Over 1679-1805 the chain is Cytoplasmic; that stretch reads SVVIVGRIIL…SITSPLTTQN (127 aa). A helical transmembrane segment spans residues 1806–1826; the sequence is TLLFNILGGWVAAQLAPPSAA. At 1827-1828 the chain is on the lumenal side; it reads SA. Residues 1829 to 1849 form a helical membrane-spanning segment; that stretch reads FVGAGIAGAAVGSIGLGKVLV. The glycine zipper stretch occupies residues 1833-1861; sequence GIAGAAVGSIGLGKVLVDILAGYGAGVAG. Aspartate 1850 is a topological domain (cytoplasmic). The chain crosses the membrane as a helical span at residues 1851 to 1871; the sequence is ILAGYGAGVAGALVAFKVMSG. The Lumenal segment spans residues 1872 to 1881; the sequence is EMPSTEDLVN. A helical transmembrane segment spans residues 1882–1902; that stretch reads LLPAILSPGALVVGVVCAAIL. The Cytoplasmic segment spans residues 1903-1972; that stretch reads RRHVGPGEGA…WINEDCSTPC (70 aa). 2 S-palmitoyl cysteine; by host lipidation sites follow: cysteine 1968 and cysteine 1972. The stretch at 1973–2002 is an intramembrane region; the sequence is SGSWLKDVWDWICTVLSDFKTWLQSKLLPR. Residues 1978 to 1998 are membrane-binding; the sequence is KDVWDWICTVLSDFKTWLQSK. Topologically, residues 2003–2989 are cytoplasmic; sequence LPGLPFLSCQ…YHSLSRARPR (987 aa). Residues 2005–2221 are RNA-binding; that stretch reads GLPFLSCQRG…KATCTTHHDS (217 aa). Residues cysteine 2011, cysteine 2029, cysteine 2031, and cysteine 2052 each contribute to the Zn(2+) site. Residues 2120–2208 form an FKBP8-binding region; it reads EFFTEVDGVR…ASSSASQLSA (89 aa). Positions 2120 to 2332 are transcriptional activation; the sequence is EFFTEVDGVR…PIPPPRRKRT (213 aa). The segment at 2135 to 2139 is interaction with non-structural protein 4A; the sequence is PVCKP. Positions 2187 to 2219 are disordered; that stretch reads KRRLARGSPPSLASSSASQLSAPSLKATCTTHH. Positions 2189 to 2441 are interaction with host SKP2; the sequence is RLARGSPPSL…PCAAEESKLP (253 aa). Serine 2194 bears the Phosphoserine; by host; in p56 mark. Low complexity predominate over residues 2194–2211; the sequence is SPPSLASSSASQLSAPSL. 5 positions are modified to phosphoserine; by host; in p58: serine 2197, serine 2201, serine 2204, serine 2207, and serine 2210. ISDR regions lie at residues 2206–2245 and 2210–2249; these read LSAP…TRVE and SLKA…SENK. Positions 2210–2275 are EIF2AK2/PKR-binding; that stretch reads SLKATCTTHH…REISVPAEIL (66 aa). Positions 2249–2306 are NS4B-binding; the sequence is KVVILDSFDPIRAVEDEREISVPAEILRKPRKFPPALPIWARPDYNPPLLESWKDPDY. Residues 2322-2325 carry the SH3-binding motif; the sequence is PPIP. Residues 2326-2334 carry the Nuclear localization signal motif; that stretch reads PPRRKRTVV. The interval 2332 to 2441 is interaction with host IFI27; it reads TVVLTESTVS…PCAAEESKLP (110 aa). Lysine 2350 is covalently cross-linked (Glycyl lysine isopeptide (Lys-Gly) (interchain with G-Cter in ubiquitin)). Residues 2351-2365 are compositionally biased toward polar residues; that stretch reads TFGSSGSSAVDSGTA. The tract at residues 2351 to 2408 is disordered; it reads TFGSSGSSAVDSGTATGPPDQASDDGDKGSDVESYSSMPPLEGEPGDPDLSDGSWSTV. Residues 2354 to 2377 are V3; sequence SSGSSAVDSGTATGPPDQASDDGD. Phosphoserine; by host occurs at positions 2448 and 2461. The RdRp catalytic domain maps to 2633–2751; that stretch reads PMGFSYDTRC…ICESAGTQED (119 aa). The Mg(2+) site is built by aspartate 2639, aspartate 2737, and aspartate 2738. Residues 2990-3010 traverse the membrane as a helical segment; that stretch reads WFMLCLLLLSVGVGIYLLPNR.

The protein belongs to the hepacivirus polyprotein family. As to quaternary structure, homooligomer. Interacts with E1 (via C-terminus). Interacts with the non-structural protein 5A. Interacts (via N-terminus) with host STAT1 (via SH2 domain); this interaction results in decreased STAT1 phosphorylation and ubiquitin-mediated proteasome-dependent STAT1 degradation, leading to decreased IFN-stimulated gene transcription. Interacts with host STAT3; this interaction constitutively activates STAT3. Interacts with host LTBR receptor. Interacts with host TNFRSF1A receptor and possibly induces apoptosis. Interacts with host HNRPK. Interacts with host YWHAE. Interacts with host UBE3A/E6AP. Interacts with host DDX3X. Interacts with host APOA2. Interacts with host RXRA protein. Interacts with host SP110 isoform 3/Sp110b; this interaction sequesters the transcriptional corepressor SP110 away from the nucleus. Interacts with host CREB3 nuclear transcription protein; this interaction triggers cell transformation. Interacts with host ACY3. Interacts with host C1QR1. Interacts with host RBM24; this interaction, which enhances the interaction of the mature core protein with 5'-UTR, may inhibit viral translation and favor replication. Interacts with host EIF2AK2/PKR; this interaction induces the autophosphorylation of EIF2AK2. Part of the viral assembly initiation complex composed of NS2, E1, E2, NS3, NS4A, NS5A and the mature core protein. Forms a heterodimer with envelope glycoprotein E2. Interacts with mature core protein. Interacts with protease NS2. The heterodimer E1/E2 interacts with host CLDN1; this interaction plays a role in viral entry into host cell. Interacts with host SPSB2 (via C-terminus). Part of the viral assembly initiation complex composed of NS2, E1, E2, NS3, NS4A, NS5A and the mature core protein. Interacts with host NEURL3; this interaction prevents E1 binding to glycoprotein E2. In terms of assembly, forms a heterodimer with envelope glycoprotein E1. Interacts with host CD81 and SCARB1 receptors; these interactions play a role in viral entry into host cell. Interacts with host EIF2AK2/PKR; this interaction inhibits EIF2AK2 and probably allows the virus to evade the innate immune response. Interacts with host CD209/DC-SIGN and CLEC4M/DC-SIGNR. Interact with host SPCS1; this interaction is essential for viral particle assembly. Interacts with protease NS2. The heterodimer E1/E2 interacts with host CLDN1; this interaction plays a role in viral entry into host cell. Part of the viral assembly initiation complex composed of NS2, E1, E2, NS3, NS4A, NS5A and the mature core protein. Interacts with host SLC3A2/4F2hc; the interaction may facilitate viral entry into host cell. Interacts with human PLSCR1. As to quaternary structure, homohexamer. Homoheptamer. Interacts with protease NS2. Homodimer. Interacts with host SPCS1; this interaction is essential for viral particle assembly. Interacts with envelope glycoprotein E1. Interacts with envelope glycoprotein E2. Interacts with viroporin p7. Interacts with serine protease/helicase NS3. Part of the replication complex composed of NS2, NS3, NS4A, NS4B, NS5A and the RNA-directed RNA polymerase embedded in an ER-derived membranous web. Part of the viral assembly initiation complex composed of NS2, E1, E2, NS3, NS4A, NS5A and the mature core protein. In terms of assembly, interacts with protease NS2. Interacts with non-structural protein 4A; this interaction stabilizes the folding of NS3 serine protease. NS3-NS4A interaction is essential for NS3 activation and allows membrane anchorage of the latter. NS3/NS4A complex also prevents phosphorylation of host IRF3, thus preventing the establishment of dsRNA induced antiviral state. Interacts with host MAVS; this interaction leads to the cleavage and inhibition of host MAVS. Interacts with host TICAM1; this interaction leads to the cleavage and inhibition of host TICAM1. Interacts with host TANK-binding kinase/TBK1; this interaction results in the inhibition of the association between TBK1 and IRF3, which leads to the inhibition of IRF3 activation. Interacts with host RBM24. Part of the replication complex composed of NS2, NS3, NS4A, NS4B, NS5A and the RNA-directed RNA polymerase embedded in an ER-derived membranous web. Part of the viral assembly initiation complex composed of NS2, E1, E2, NS3, NS4A, NS5A and the mature core protein. As to quaternary structure, interacts with NS3 serine protease; this interaction stabilizes the folding of NS3 serine protease. NS3-NS4A interaction is essential for NS3 activation and allows membrane anchorage of the latter. Interacts with non-structural protein 5A (via N-terminus). Part of the replication complex composed of NS2, NS3, NS4A, NS4B, NS5A and the RNA-directed RNA polymerase embedded in an ER-derived membranous web. Part of the viral assembly initiation complex composed of NS2, E1, E2, NS3, NS4A, NS5A and the mature core protein. Homomultimer. Interacts with non-structural protein NS5A. Interacts with host PLA2G4C; this interaction likely initiates the recruitment of replication complexes to lipid droplets. Interacts with host STING; this interaction disrupts the interaction between STING and TBK1 thereby suppressing the interferon signaling. Part of the replication complex composed of NS2, NS3, NS4A, NS4B, NS5A and the RNA-directed RNA polymerase embedded in an ER-derived membranous web. In terms of assembly, monomer. Homodimer; dimerization is required for RNA-binding. Interacts with the mature core protein. Interacts (via N-terminus) with non-structural protein 4A. Interacts with non-structural protein 4B. Interacts with RNA-directed RNA polymerase. Part of the viral assembly initiation complex composed of NS2, E1, E2, NS3, NS4A, NS5A and the mature core protein. Part of the replication complex composed of NS2, NS3, NS4A, NS4B, NS5A and the RNA-directed RNA polymerase. Interacts with host GRB2. Interacts with host BIN1. Interacts with host PIK3R1. Interacts with host SRCAP. Interacts with host FKBP8. Interacts with host VAPB. Interacts with host EIF2AK2/PKR; this interaction leads to disruption of EIF2AK2 dimerization by NS5A and probably allows the virus to evade the innate immune response. Interacts (via N-terminus) with host PACSIN2 (via N-terminus); this interaction attenuates protein kinase C alpha-mediated phosphorylation of PACSIN2 by disrupting the interaction between PACSIN2 and PRKCA. Interacts (via N-terminus) with host SRC kinase (via SH2 domain). Interacts with most Src-family kinases. Interacts with host IFI27 and SKP2; promotes the ubiquitin-mediated proteasomal degradation of NS5A. Interacts with host GPS2. Interacts with host TNFRSF21; this interaction allows the modulation by the virus of JNK, p38 MAPK, STAT3, and Akt signaling pathways in a DR6-dependent manner. Interacts (via N-terminus) with host CIDEB (via N-terminus); this interaction seems to regulate the association of HCV particles with APOE. Interacts with host CHKA/Choline Kinase-alpha; CHKA bridges host PI4KA and NS5A and potentiates NS5A-stimulated PI4KA activity, which then facilitates the targeting of the ternary complex to the ER for viral replication. Interacts with host SPSB2 (via C-terminus); this interaction targets NS5A for ubiquitination and degradation. Interacts with host RAB18; this interaction may promote the association of NS5A and other replicase components with lipid droplets. Interacts (via region D2) with host PPIA/CYPA; the interaction stimulates RNA-binding ability of NS5A and is dependent on the peptidyl-prolyl cis-trans isomerase activity of PPIA/CYPA. Interacts with host TRIM14; this interaction induces the degradation of NS5A. As to quaternary structure, homooligomer. Interacts with non-structural protein 5A. Interacts with host VAPB. Interacts with host PRK2/PKN2. Interacts with host HNRNPA1 and SEPT6; these interactions facilitate the viral replication. Part of the replication complex composed of NS2, NS3, NS4A, NS4B, NS5A and the RNA-directed RNA polymerase. Requires Zn(2+) as cofactor. The cofactor is Mg(2+). Post-translationally, specific enzymatic cleavages in vivo yield mature proteins. The structural proteins, core, E1, E2 and p7 are produced by proteolytic processing by host signal peptidases. The core protein is synthesized as a 23 kDa precursor which is retained in the ER membrane through the hydrophobic signal peptide. Cleavage by the signal peptidase releases the 21 kDa mature core protein. The cleavage of the core protein precursor occurs between aminoacids 176 and 188 but the exact cleavage site is not known. Some degraded forms of the core protein appear as well during the course of infection. The other proteins (p7, NS2, NS3, NS4A, NS4B, NS5A and NS5B) are cleaved by the viral proteases. Autoprocessing between NS2 and NS3 is mediated by the NS2 cysteine protease catalytic domain and regulated by the NS3 N-terminal domain. Phosphorylated by host PKC and PKA. In terms of processing, ubiquitinated; mediated by UBE3A and leading to core protein subsequent proteasomal degradation. Post-translationally, highly N-glycosylated. Palmitoylation is required for NS2/3 autoprocessing and E2 recruitment to membranes. In terms of processing, palmitoylated. This modification may play a role in its polymerization or in protein-protein interactions. Post-translationally, cleaved by host caspases which are probably activated by the viral infection. Ubiquitinated. Ubiquitination, most probably at Lys-2350, mediated by host IFI27 and SKP2 leads to proteasomal degradation, restricting viral infection. In terms of processing, phosphorylated on serines in a basal form termed p56. p58 is a hyperphosphorylated form of p56. p56 and p58 coexist in the cell in roughly equivalent amounts. Hyperphosphorylation is dependent on the presence of NS4A. Host CSNK1A1/CKI-alpha or RPS6KB1 kinases may be responsible for NS5A phosphorylation. Phosphorylated NS5A is involved in viral replication. Post-translationally, tyrosine phosphorylation is essential for the interaction with host SRC. The N-terminus is phosphorylated by host PRK2/PKN2.

Its subcellular location is the host endoplasmic reticulum membrane. The protein resides in the host mitochondrion membrane. It localises to the virion. The protein localises to the host cytoplasm. It is found in the host nucleus. Its subcellular location is the host lipid droplet. The protein resides in the virion membrane. It localises to the host mitochondrion. The protein localises to the host cell membrane. It is found in the host perinuclear region. The enzyme catalyses Hydrolysis of four peptide bonds in the viral precursor polyprotein, commonly with Asp or Glu in the P6 position, Cys or Thr in P1 and Ser or Ala in P1'.. It catalyses the reaction a ribonucleoside 5'-triphosphate + H2O = a ribonucleoside 5'-diphosphate + phosphate + H(+). It carries out the reaction ATP + H2O = ADP + phosphate + H(+). The catalysed reaction is RNA(n) + a ribonucleoside 5'-triphosphate = RNA(n+1) + diphosphate. With respect to regulation, inhibited by the antiviral drug hexamethylene amiloride. Inhibition by amantadine appears to be genotype-dependent. Also inhibited by long-alkyl-chain iminosugar derivatives. Activity is up-regulated by PRK2/PKN2-mediated phosphorylation. Packages viral RNA to form a viral nucleocapsid, and promotes virion budding. Participates in the viral particle production as a result of its interaction with the non-structural protein 5A. Binds RNA and may function as a RNA chaperone to induce the RNA structural rearrangements taking place during virus replication. Modulates viral translation initiation by interacting with viral IRES and 40S ribosomal subunit. Affects various cell signaling pathways, host immunity and lipid metabolism. Prevents the establishment of cellular antiviral state by blocking the interferon-alpha/beta (IFN-alpha/beta) and IFN-gamma signaling pathways and by blocking the formation of phosphorylated STAT1 and promoting ubiquitin-mediated proteasome-dependent degradation of STAT1. Activates STAT3 leading to cellular transformation. Regulates the activity of cellular genes, including c-myc and c-fos. May repress the promoter of p53, and sequester CREB3 and SP110 isoform 3/Sp110b in the cytoplasm. Represses cell cycle negative regulating factor CDKN1A, thereby interrupting an important check point of normal cell cycle regulation. Targets transcription factors involved in the regulation of inflammatory responses and in the immune response: suppresses NF-kappa-B activation, and activates AP-1. Binds to dendritic cells (DCs) via C1QR1, resulting in down-regulation of T-lymphocytes proliferation. Alters lipid metabolism by interacting with hepatocellular proteins involved in lipid accumulation and storage. Induces up-regulation of FAS promoter activity, and thereby contributes to the increased triglyceride accumulation in hepatocytes (steatosis). Functionally, forms a heterodimer with envelope glycoprotein E2, which mediates virus attachment to the host cell, virion internalization through clathrin-dependent endocytosis and fusion with host membrane. Fusion with the host cell is most likely mediated by both E1 and E2, through conformational rearrangements of the heterodimer required for fusion rather than a classical class II fusion mechanism. E1/E2 heterodimer binds host apolipoproteins such as APOB and APOE thereby forming a lipo-viro-particle (LVP). APOE associated to the LVP allows the initial virus attachment to cell surface receptors such as the heparan sulfate proteoglycans (HSPGs), syndecan-1 (SDC1), syndecan-1 (SDC2), the low-density lipoprotein receptor (LDLR) and scavenger receptor class B type I (SCARB1). The cholesterol transfer activity of SCARB1 allows E2 exposure and binding of E2 to SCARB1 and the tetraspanin CD81. E1/E2 heterodimer binding on CD81 activates the epithelial growth factor receptor (EGFR) signaling pathway. Diffusion of the complex E1-E2-EGFR-SCARB1-CD81 to the cell lateral membrane allows further interaction with Claudin 1 (CLDN1) and occludin (OCLN) to finally trigger HCV entry. In terms of biological role, forms a heterodimer with envelope glycoprotein E1, which mediates virus attachment to the host cell, virion internalization through clathrin-dependent endocytosis and fusion with host membrane. Fusion with the host cell is most likely mediated by both E1 and E2, through conformational rearrangements of the heterodimer required for fusion rather than a classical class II fusion mechanism. The interaction between envelope glycoprotein E2 and host apolipoprotein E/APOE allows the proper assembly, maturation and infectivity of the viral particles. This interaction is probably promoted via the up-regulation of cellular autophagy by the virus. E1/E2 heterodimer binds host apolipoproteins such as APOB and APOE thereby forming a lipo-viro-particle (LVP). APOE associated to the LVP allows the initial virus attachment to cell surface receptors such as the heparan sulfate proteoglycans (HSPGs), syndecan-1 (SDC1), syndecan-1 (SDC2), the low-density lipoprotein receptor (LDLR) and scavenger receptor class B type I (SCARB1). The cholesterol transfer activity of SCARB1 allows E2 exposure and binding of E2 to SCARB1 and the tetraspanin CD81. E1/E2 heterodimer binding on CD81 activates the epithelial growth factor receptor (EGFR) signaling pathway. Diffusion of the complex E1-E2-EGFR-SCARB1-CD81 to the cell lateral membrane allows further interaction with Claudin 1 (CLDN1) and occludin (OCLN) to finally trigger HCV entry. Inhibits host EIF2AK2/PKR activation, preventing the establishment of an antiviral state. Viral ligand for CD209/DC-SIGN and CLEC4M/DC-SIGNR, which are respectively found on dendritic cells (DCs), and on liver sinusoidal endothelial cells and macrophage-like cells of lymph node sinuses. These interactions allow the capture of circulating HCV particles by these cells and subsequent facilitated transmission to permissive cells such as hepatocytes and lymphocyte subpopulations. The interaction between E2 and host amino acid transporter complex formed by SLC3A2 and SLC7A5/LAT1 may facilitate viral entry into host cell. Its function is as follows. Ion channel protein that acts as a viroporin and plays an essential role in the assembly, envelopment and secretion of viral particles. Regulates the host cell secretory pathway, which induces the intracellular retention of viral glycoproteins and favors assembly of viral particles. Creates a pore in acidic organelles and releases Ca(2+) and H(+) in the cytoplasm of infected cells, leading to a productive viral infection. High levels of cytoplasmic Ca(2+) may trigger membrane trafficking and transport of viral ER-associated proteins to viroplasms, sites of viral genome replication. This ionic imbalance induces the assembly of the inflammasome complex, which triggers the maturation of pro-IL-1beta into IL-1beta through the action of caspase-1. Targets also host mitochondria and induces mitochondrial depolarization. In addition of its role as a viroporin, acts as a lipid raft adhesion factor. Cysteine protease required for the proteolytic auto-cleavage between the non-structural proteins NS2 and NS3. The N-terminus of NS3 is required for the function of NS2 protease (active region NS2-3). Promotes the initiation of viral particle assembly by mediating the interaction between structural and non-structural proteins. Functionally, displays three enzymatic activities: serine protease with a chymotrypsin-like fold, NTPase and RNA helicase. NS3 serine protease, in association with NS4A, is responsible for the cleavages of NS3-NS4A, NS4A-NS4B, NS4B-NS5A and NS5A-NS5B. The NS3/NS4A complex prevents phosphorylation of host IRF3, thus preventing the establishment of dsRNA induced antiviral state. The NS3/NS4A complex induces host amino acid transporter component SLC3A2, thus contributing to HCV propagation. NS3 RNA helicase binds to RNA and unwinds both dsDNA and dsRNA in the 3' to 5' direction, and likely resolves RNA complicated stable secondary structures in the template strand. Binds a single ATP and catalyzes the unzipping of a single base pair of dsRNA. Inhibits host antiviral proteins TBK1 and IRF3 thereby preventing the establishment of an antiviral state. Cleaves host MAVS/CARDIF thereby preventing the establishment of an antiviral state. Cleaves host TICAM1/TRIF, thereby disrupting TLR3 signaling and preventing the establishment of an antiviral state. In terms of biological role, peptide cofactor which forms a non-covalent complex with the N-terminal of NS3 serine protease. The NS3/NS4A complex prevents phosphorylation of host IRF3, thus preventing the establishment of dsRNA induced antiviral state. The NS3/NS4A complex induces host amino acid transporter component SLC3A2, thus contributing to HCV propagation. Its function is as follows. Induces a specific membrane alteration that serves as a scaffold for the virus replication complex. This membrane alteration gives rise to the so-called ER-derived membranous web that contains the replication complex. NS4B self-interaction contributes to its function in membranous web formation. Promotes host TRIF protein degradation in a CASP8-dependent manner thereby inhibiting host TLR3-mediated interferon signaling. Disrupts the interaction between STING and TBK1 contributing to the inhibition of interferon signaling. Phosphorylated protein that is indispensable for viral replication and assembly. Both hypo- and hyperphosphorylated states are required for the viral life cycle. The hyperphosphorylated form of NS5A is an inhibitor of viral replication. Involved in RNA-binding and especially in binding to the viral genome. Zinc is essential for RNA-binding. Participates in the viral particle production as a result of its interaction with the mature viral core protein. Its interaction with host VAPB may target the viral replication complex to vesicles. Down-regulates viral IRES translation initiation. Mediates interferon resistance, presumably by interacting with and inhibiting host EIF2AK2/PKR. Prevents BIN1-induced apoptosis. Acts as a transcriptional activator of some host genes important for viral replication when localized in the nucleus. Via the interaction with host PACSIN2, modulates lipid droplet formation in order to promote virion assembly. Modulates TNFRSF21/DR6 signaling pathway for viral propagation. Functionally, RNA-dependent RNA polymerase that performs primer-template recognition and RNA synthesis during viral replication. Initiates RNA transcription/replication at a flavin adenine dinucleotide (FAD), resulting in a 5'- FAD cap on viral RNAs. In this way, recognition of viral 5' RNA by host pattern recognition receptors can be bypassed, thereby evading activation of antiviral pathways. The sequence is that of Genome polyprotein from Hepatitis C virus genotype 1b (isolate Japanese) (HCV).